Here is a 1207-residue protein sequence, read N- to C-terminus: MTNPTEHTLPSNSILESREGEFGCTVMDLRKLMELRSSDAIDQINVHYGGVMNLCSRLKTNPVEGLSGNPADLEKRKQVFGQNLIPPKKPKTFLELVWEALQDVTLIILEIAAIISLVLSFYRPPGGENEQCGLAVTSPEDEGEAEAGWIEGAAILFSVIIVVLVTAFNDWSKEKQFRGLQNRIEKEQKFSVIRNGHIIQLPVAEIVVGDIAQIKYGDLLPADGILIQGNDLKIDESSLTGESDHVKKSLERDPMLLSGTHVMEGSGRMVVTAVGINSQTGIIFTLLGASEGEEEEKKKKGKKQGVPENRNKAKTQDGVALEIQPLNSQEGIDSEEKEKKAAKLPKKEKSVLQGKLTRLAVQIGKAGLIMSAITVLILILYFVIDNFVIQRRPWLAECTPIYVQYFVKFFIIGVTVLVVAVPEGLPLAVTISLAYSVKKMMKDNNLVRHLDACETMGNATAICSDKTGTLTMNRMSVVQAYIGDTRYHQIPSPDDLVPKVLDLIVNGISINSAYTSKILPPEKEGGLPRQVGNKTECALLGFVSDLKQDYHAVRSEVPEEKLYKVYTFNSVRKSMSTVIEKPGGGYRMYSKGASEIILRKCNRILDKKGEAVPFKNKDRDEMVRTVIEPMACEGLRTLCIAYRDFNDGEPPWDNESEILTELTCIAVVGIEDPVRPEVPEAIAKCKRAGITVRMVTGDNINTARAIATKCGIVTPGDDFLCLEGKEFNRLIRNEKGEVEQEKLDKIWPKLRVLARSSPTDKHTLVKGIIDSTVGDQRQVVAVTGDGTNDGPALKKADVGFAMGIAGTDVAKEASDIILTDDNFTSIVKAVMWGRNVYDSISKFLQFQLTVNVVAVIVAFTGACITQDSPLKAVQMLWVNLIMDTFASLALATEPPTDSLLKRRPYGRNKPLISRTMMKNILGHAVYQLTVIFFLVFAGEKFFDIDSGRRAPLHSPPSQHYTIIFNTFVLMQLFNEINSRKIHGERNVFSGIFRNLIFCSVVLGTFISQIIIVEFGGKPFSCTKLTLSQWFWCLFIGIGELLWGQVISTIPTQSLKFLKEAGHGTTKEEITKDAEGLDEIDHAEMELRRGQILWFRGLNRIQTQIKVVKAFHSSLHESIQKPKNQNSIHNFMTHPEFTIDEEGPRTPLLDEQEEEIFEKVSKPGTKTSSLDGEVTPQTNKNNNTVDCCQVQIVASHSDSPLHSLETSV.

Over 1–100 the chain is Cytoplasmic; the sequence is MTNPTEHTLP…KTFLELVWEA (100 aa). The residue at position 13 (serine 13) is a Phosphoserine. Residues 101–121 form a helical membrane-spanning segment; sequence LQDVTLIILEIAAIISLVLSF. The Extracellular segment spans residues 122-147; it reads YRPPGGENEQCGLAVTSPEDEGEAEA. The helical transmembrane segment at 148–168 threads the bilayer; the sequence is GWIEGAAILFSVIIVVLVTAF. The Cytoplasmic portion of the chain corresponds to 169 to 368; that stretch reads NDWSKEKQFR…LAVQIGKAGL (200 aa). Residues 294–317 are disordered; the sequence is EEEKKKKGKKQGVPENRNKAKTQD. Phosphoserine is present on residues serine 328 and serine 334. A helical transmembrane segment spans residues 369-389; sequence IMSAITVLILILYFVIDNFVI. Residues 390-408 lie on the Extracellular side of the membrane; the sequence is QRRPWLAECTPIYVQYFVK. The chain crosses the membrane as a helical span at residues 409-429; it reads FFIIGVTVLVVAVPEGLPLAV. Over 430-843 the chain is Cytoplasmic; that stretch reads TISLAYSVKK…RNVYDSISKF (414 aa). The active-site 4-aspartylphosphate intermediate is the aspartate 465. 2 residues coordinate Mg(2+): aspartate 785 and aspartate 789. Residues 844–864 traverse the membrane as a helical segment; sequence LQFQLTVNVVAVIVAFTGACI. Residues 865–871 are Extracellular-facing; sequence TQDSPLK. A helical membrane pass occupies residues 872-892; the sequence is AVQMLWVNLIMDTFASLALAT. The Cytoplasmic segment spans residues 893–918; sequence EPPTDSLLKRRPYGRNKPLISRTMMK. Residues 919–939 traverse the membrane as a helical segment; it reads NILGHAVYQLTVIFFLVFAGE. The Extracellular portion of the chain corresponds to 940–957; the sequence is KFFDIDSGRRAPLHSPPS. The chain crosses the membrane as a helical span at residues 958–977; that stretch reads QHYTIIFNTFVLMQLFNEIN. The Cytoplasmic segment spans residues 978–994; that stretch reads SRKIHGERNVFSGIFRN. The chain crosses the membrane as a helical span at residues 995–1015; the sequence is LIFCSVVLGTFISQIIIVEFG. Over 1016-1028 the chain is Extracellular; sequence GKPFSCTKLTLSQ. Residues 1029-1049 form a helical membrane-spanning segment; that stretch reads WFWCLFIGIGELLWGQVISTI. Residues 1050-1207 lie on the Cytoplasmic side of the membrane; sequence PTQSLKFLKE…SPLHSLETSV (158 aa). The segment at 1086 to 1103 is calmodulin-binding subdomain A; the sequence is LRRGQILWFRGLNRIQTQ. A Phosphothreonine; by PKC modification is found at threonine 1102. The calmodulin-binding subdomain B stretch occupies residues 1104 to 1113; sequence IKVVKAFHSS. The disordered stretch occupies residues 1159-1181; sequence VSKPGTKTSSLDGEVTPQTNKNN. A compositionally biased stretch (polar residues) spans 1163–1181; it reads GTKTSSLDGEVTPQTNKNN.

Belongs to the cation transport ATPase (P-type) (TC 3.A.3) family. Type IIB subfamily. Interacts with PDZD11. Interacts with SLC35G1 and STIM1. Interacts with calmodulin. As to expression, isoform 1 is detected in brain, heart, liver, testis and epididymis. Isoform 2 is detected in brain (at protein level), heart, seminal vesicle and epididymis. There is a shift in expression from isoform 1 to isoform 2 along the length of the epididymis from caput to cauda (at protein level).

Its subcellular location is the cell membrane. The protein resides in the cell projection. It localises to the cilium. The protein localises to the flagellum membrane. The catalysed reaction is Ca(2+)(in) + ATP + H2O = Ca(2+)(out) + ADP + phosphate + H(+). Its activity is regulated as follows. Activated by calcium/calmodulin. Its function is as follows. Calcium/calmodulin-regulated and magnesium-dependent enzyme that catalyzes the hydrolysis of ATP coupled with the transport of calcium out of the cell. By regulating sperm cells calcium homeostasis, may play a role in sperm motility. In Bos taurus (Bovine), this protein is Plasma membrane calcium-transporting ATPase 4.